Reading from the N-terminus, the 382-residue chain is 1-deoxy-D-xylulose 5-phosphate reductoisomerase (382 aa).

S10, G11, S12, I13, G36, K37, N38, and N121 together coordinate NADPH. Residue K122 coordinates 1-deoxy-D-xylulose 5-phosphate. E123 provides a ligand contact to NADPH. A Mn(2+)-binding site is contributed by D147. 1-deoxy-D-xylulose 5-phosphate is bound by residues S148, E149, S173, and H196. E149 is a binding site for Mn(2+). G202 lines the NADPH pocket. Positions 209, 214, 215, and 218 each coordinate 1-deoxy-D-xylulose 5-phosphate. E218 contacts Mn(2+).

This sequence belongs to the DXR family. Requires Mg(2+) as cofactor. Mn(2+) serves as cofactor.

It catalyses the reaction 2-C-methyl-D-erythritol 4-phosphate + NADP(+) = 1-deoxy-D-xylulose 5-phosphate + NADPH + H(+). It participates in isoprenoid biosynthesis; isopentenyl diphosphate biosynthesis via DXP pathway; isopentenyl diphosphate from 1-deoxy-D-xylulose 5-phosphate: step 1/6. In terms of biological role, catalyzes the NADPH-dependent rearrangement and reduction of 1-deoxy-D-xylulose-5-phosphate (DXP) to 2-C-methyl-D-erythritol 4-phosphate (MEP). In Geobacillus kaustophilus (strain HTA426), this protein is 1-deoxy-D-xylulose 5-phosphate reductoisomerase.